We begin with the raw amino-acid sequence, 898 residues long: Phosphoenolpyruvate carboxylase (898 aa).

Residues His138 and Lys561 contribute to the active site.

The protein belongs to the PEPCase type 1 family. The cofactor is Mg(2+).

The enzyme catalyses oxaloacetate + phosphate = phosphoenolpyruvate + hydrogencarbonate. Its function is as follows. Forms oxaloacetate, a four-carbon dicarboxylic acid source for the tricarboxylic acid cycle. The protein is Phosphoenolpyruvate carboxylase of Streptococcus pneumoniae serotype 4 (strain ATCC BAA-334 / TIGR4).